Here is an 80-residue protein sequence, read N- to C-terminus: Large ribosomal subunit protein bL31B (80 aa).

It belongs to the bacterial ribosomal protein bL31 family. Type B subfamily. Part of the 50S ribosomal subunit.

This chain is Large ribosomal subunit protein bL31B, found in Stenotrophomonas maltophilia (strain K279a).